We begin with the raw amino-acid sequence, 580 residues long: Acyl-coenzyme A synthetase ACSM3, mitochondrial (580 aa).

The transit peptide at 1 to 21 (MAMLLRARCFHRLAIPDPRRI) directs the protein to the mitochondrion. Residues Lys-67 and Lys-100 each carry the N6-succinyllysine modification. Lys-151 is modified (N6-acetyllysine). ATP contacts are provided by residues 229–237 (TSGTTGPPK), 368–373 (EGYGQT), Asp-455, Arg-470, and Lys-566.

Belongs to the ATP-dependent AMP-binding enzyme family. Mg(2+) serves as cofactor. Requires Mn(2+) as cofactor.

The protein resides in the mitochondrion. The protein localises to the mitochondrion matrix. It catalyses the reaction a medium-chain fatty acid + ATP + CoA = a medium-chain fatty acyl-CoA + AMP + diphosphate. The enzyme catalyses propanoate + ATP + CoA = propanoyl-CoA + AMP + diphosphate. It carries out the reaction butanoate + ATP + CoA = butanoyl-CoA + AMP + diphosphate. The catalysed reaction is 2-methylpropanoate + ATP + CoA = 2-methylpropanoyl-CoA + AMP + diphosphate. It catalyses the reaction 2-methylbutanoate + ATP + CoA = 2-methylbutanoyl-CoA + AMP + diphosphate. The enzyme catalyses octanoate + ATP + CoA = octanoyl-CoA + AMP + diphosphate. In terms of biological role, catalyzes the activation of fatty acids by CoA to produce an acyl-CoA, the first step in fatty acid metabolism. Capable of activating medium-chain fatty acids with a preference for isobutyrate among fatty acids with 2-6 carbon atoms. The sequence is that of Acyl-coenzyme A synthetase ACSM3, mitochondrial (Acsm3) from Rattus norvegicus (Rat).